Reading from the N-terminus, the 353-residue chain is Methionine import ATP-binding protein MetN (353 aa).

One can recognise an ABC transporter domain in the interval 6–249; the sequence is LKNVDVDFPQ…PKQELTKKFV (244 aa). Residue 41-48 participates in ATP binding; it reads GFSGAGKS.

The protein belongs to the ABC transporter superfamily. Methionine importer (TC 3.A.1.24) family. In terms of assembly, the complex is composed of two ATP-binding proteins (MetN), two transmembrane proteins (MetI) and a solute-binding protein (MetQ).

The protein localises to the cell membrane. The catalysed reaction is L-methionine(out) + ATP + H2O = L-methionine(in) + ADP + phosphate + H(+). The enzyme catalyses D-methionine(out) + ATP + H2O = D-methionine(in) + ADP + phosphate + H(+). Its function is as follows. Part of the ABC transporter complex MetNIQ involved in methionine import. Responsible for energy coupling to the transport system. In Lactobacillus acidophilus (strain ATCC 700396 / NCK56 / N2 / NCFM), this protein is Methionine import ATP-binding protein MetN.